A 182-amino-acid polypeptide reads, in one-letter code: Adenine phosphoribosyltransferase (182 aa).

Belongs to the purine/pyrimidine phosphoribosyltransferase family. As to quaternary structure, homodimer.

The protein localises to the cytoplasm. The enzyme catalyses AMP + diphosphate = 5-phospho-alpha-D-ribose 1-diphosphate + adenine. It functions in the pathway purine metabolism; AMP biosynthesis via salvage pathway; AMP from adenine: step 1/1. In terms of biological role, catalyzes a salvage reaction resulting in the formation of AMP, that is energically less costly than de novo synthesis. The protein is Adenine phosphoribosyltransferase of Campylobacter jejuni subsp. jejuni serotype O:23/36 (strain 81-176).